The sequence spans 315 residues: Methionyl-tRNA formyltransferase (315 aa).

Residue 113 to 116 (SLLP) participates in (6S)-5,6,7,8-tetrahydrofolate binding.

It belongs to the Fmt family.

It catalyses the reaction L-methionyl-tRNA(fMet) + (6R)-10-formyltetrahydrofolate = N-formyl-L-methionyl-tRNA(fMet) + (6S)-5,6,7,8-tetrahydrofolate + H(+). Attaches a formyl group to the free amino group of methionyl-tRNA(fMet). The formyl group appears to play a dual role in the initiator identity of N-formylmethionyl-tRNA by promoting its recognition by IF2 and preventing the misappropriation of this tRNA by the elongation apparatus. The sequence is that of Methionyl-tRNA formyltransferase from Cronobacter sakazakii (strain ATCC BAA-894) (Enterobacter sakazakii).